The sequence spans 252 residues: MLTKRIIPCLDVDHGRVKKGINFVQLKDVGDPVAIAKAYQEQGADELVFLDITATNEARGTLVQTVEAVANQVFMPLTVGGGIQSVADMHALLRAGADKVSLNSAAVADPSLLTAGAEKFGRQAIVAAIDTRWQADQNRYQVTVNGGRTPVDLDAITWAKQAVAAGAGELLVTSMDADGTESGFDLRLYQQLTAAVQVPIIASGGAGSTADFVQLFTQTTVSAGLAASIFHFGELTVPQVKTALKQAKVAVR.

Active-site residues include Asp-11 and Asp-130.

The protein belongs to the HisA/HisF family. As to quaternary structure, heterodimer of HisH and HisF.

It is found in the cytoplasm. It catalyses the reaction 5-[(5-phospho-1-deoxy-D-ribulos-1-ylimino)methylamino]-1-(5-phospho-beta-D-ribosyl)imidazole-4-carboxamide + L-glutamine = D-erythro-1-(imidazol-4-yl)glycerol 3-phosphate + 5-amino-1-(5-phospho-beta-D-ribosyl)imidazole-4-carboxamide + L-glutamate + H(+). The protein operates within amino-acid biosynthesis; L-histidine biosynthesis; L-histidine from 5-phospho-alpha-D-ribose 1-diphosphate: step 5/9. In terms of biological role, IGPS catalyzes the conversion of PRFAR and glutamine to IGP, AICAR and glutamate. The HisF subunit catalyzes the cyclization activity that produces IGP and AICAR from PRFAR using the ammonia provided by the HisH subunit. The polypeptide is Imidazole glycerol phosphate synthase subunit HisF (Lacticaseibacillus paracasei (strain ATCC 334 / BCRC 17002 / CCUG 31169 / CIP 107868 / KCTC 3260 / NRRL B-441) (Lactobacillus paracasei)).